Here is an 849-residue protein sequence, read N- to C-terminus: MNPINSLAFDLHSVKLADANSDTAALSNSNTPTMNNAALLQRPSSIMDSIGVQRVPSPFVPGSNAISGASTVPFNAYDAEITGSPLQISANQENNSAFSAASSNLHMNASSPSVLNKPSSTFPNVAPYLYNATGPAPNVGNQPPPPGIESQWKYIDSNGNIQGPFGTNNMSQWYQGGYFTPTLQICRLATSPEPFGVNDRFIRLGELTTLVNNYQDPFVAFDFIVIRALNAVPLVAPTSSEKQKVESRDLIPVADVHSDDFTYEEILGLKFEDGSYYHETQVWVPVDGRHITKVDRIPKISAYTAPLSTTSSRSNKTTSSHEEKVPSHEEASPEEQEVFSEEGRTVSNITNEEESIVKNPTKQEEESRGSEKEQNILDQVQPEIEEVDRKDVISTADEPKSKDTPQMTSEEQKRFAKAELMAQKLLEEQQRQEEEKKRREEQRKLKKEKKLKQKQKKEEEKLKKKKKEEGKLEKEKQKELLNNILTGDTETPSSENTATSITTNLAPWANKKPEGAVYNQISSALEDLKKENSSKKEKKPNRTQLDREQALKLQKEILSSAQIPKTQTGSAWGIKPQQPIKVDIKGELMKDSTKINSQSKINKANNGDIKPDSTFIEEQKKLWEQVQKKTKKFNRASSLDDFISRTPSPSSSALNSSNTSNAWTTVSSKSTTHIASTMPVAGNQSKSYISLDTLRSSGGLSTATKTKMSDKSKQIGSSTSIPTLKARQVKPSRIPAYPGNASVSKRQEFLRWCRSQLKLNTGVQPDNVLEMLLSLPPGSESKEIIADTIYSYSSTMDGRRFATDFIKKRLECEEEINDPLSWSEVLAMPEGSSEDWEFQVVGKKKGKRF.

In terms of domain architecture, GYF spans 149-205 (ESQWKYIDSNGNIQGPFGTNNMSQWYQGGYFTPTLQICRLATSPEPFGVNDRFIRLG). 4 disordered regions span residues 305–505 (APLS…TTNL), 527–547 (DLKK…QLDR), 593–612 (TKIN…IKPD), and 634–661 (NRAS…NTSN). Low complexity predominate over residues 308 to 318 (STTSSRSNKTT). Residues 319 to 331 (SSHEEKVPSHEEA) show a composition bias toward basic and acidic residues. Position 350 is a phosphothreonine (threonine 350). 3 stretches are compositionally biased toward basic and acidic residues: residues 361-375 (TKQE…KEQN), 387-403 (VDRK…KSKD), and 425-443 (LLEE…EEQR). Residues 410–484 (EEQKRFAKAE…EKQKELLNNI (75 aa)) are a coiled coil. Residues 444 to 455 (KLKKEKKLKQKQ) are compositionally biased toward basic residues. Basic and acidic residues predominate over residues 456–479 (KKEEEKLKKKKKEEGKLEKEKQKE). Over residues 483–505 (NILTGDTETPSSENTATSITTNL) the composition is skewed to polar residues. The segment covering 594-605 (KINSQSKINKAN) has biased composition (polar residues). Positions 644 to 661 (SRTPSPSSSALNSSNTSN) are enriched in low complexity.

The protein belongs to the SMY2/mpd2 family. As to quaternary structure, interacts with ribosomes. Interacts with EAP1 and MSL5 (via the GYP domain).

It is found in the cytoplasm. The sequence is that of SMY2 homolog 2 (SYH1) from Saccharomyces cerevisiae (strain ATCC 204508 / S288c) (Baker's yeast).